The chain runs to 192 residues: Elongation factor P (192 aa).

This sequence belongs to the elongation factor P family.

Its subcellular location is the cytoplasm. It functions in the pathway protein biosynthesis; polypeptide chain elongation. Functionally, involved in peptide bond synthesis. Stimulates efficient translation and peptide-bond synthesis on native or reconstituted 70S ribosomes in vitro. Probably functions indirectly by altering the affinity of the ribosome for aminoacyl-tRNA, thus increasing their reactivity as acceptors for peptidyl transferase. The chain is Elongation factor P from Borreliella afzelii (strain PKo) (Borrelia afzelii).